A 227-amino-acid polypeptide reads, in one-letter code: Small ribosomal subunit protein uS3 (227 aa).

A KH type-2 domain is found at 39 to 108; the sequence is IRKFIEERYK…EVIVNVDEVK (70 aa).

The protein belongs to the universal ribosomal protein uS3 family. Part of the 30S ribosomal subunit. Forms a tight complex with proteins S10 and S14.

Functionally, binds the lower part of the 30S subunit head. Binds mRNA in the 70S ribosome, positioning it for translation. The polypeptide is Small ribosomal subunit protein uS3 (Sulfurihydrogenibium sp. (strain YO3AOP1)).